The chain runs to 212 residues: Large ribosomal subunit protein uL3 (212 aa).

The interval 135 to 161 is disordered; the sequence is MTHGNSLSHRAPGSIGQNQSPGKVFKG. An N5-methylglutamine modification is found at Gln-153.

This sequence belongs to the universal ribosomal protein uL3 family. As to quaternary structure, part of the 50S ribosomal subunit. Forms a cluster with proteins L14 and L19. In terms of processing, methylated by PrmB.

Its function is as follows. One of the primary rRNA binding proteins, it binds directly near the 3'-end of the 23S rRNA, where it nucleates assembly of the 50S subunit. This is Large ribosomal subunit protein uL3 from Alteromonas mediterranea (strain DSM 17117 / CIP 110805 / LMG 28347 / Deep ecotype).